The primary structure comprises 533 residues: NADH-quinone oxidoreductase subunit N (533 aa).

14 consecutive transmembrane segments (helical) span residues valine 13–valine 33, leucine 40–valine 60, proline 87–alanine 107, histidine 141–alanine 161, leucine 164–leucine 184, phenylalanine 200–phenylalanine 220, leucine 243–phenylalanine 263, proline 275–leucine 295, glutamine 310–valine 330, methionine 337–glutamine 357, valine 373–leucine 393, valine 417–phenylalanine 437, glycine 451–valine 471, and alanine 502–leucine 522.

The protein belongs to the complex I subunit 2 family. In terms of assembly, NDH-1 is composed of 14 different subunits. Subunits NuoA, H, J, K, L, M, N constitute the membrane sector of the complex.

Its subcellular location is the cell membrane. It carries out the reaction a quinone + NADH + 5 H(+)(in) = a quinol + NAD(+) + 4 H(+)(out). NDH-1 shuttles electrons from NADH, via FMN and iron-sulfur (Fe-S) centers, to quinones in the respiratory chain. The immediate electron acceptor for the enzyme in this species is believed to be a menaquinone. Couples the redox reaction to proton translocation (for every two electrons transferred, four hydrogen ions are translocated across the cytoplasmic membrane), and thus conserves the redox energy in a proton gradient. The polypeptide is NADH-quinone oxidoreductase subunit N (Nocardioides sp. (strain ATCC BAA-499 / JS614)).